We begin with the raw amino-acid sequence, 367 residues long: Homoserine O-acetyltransferase (367 aa).

The AB hydrolase-1 domain occupies 41–339 (NLIVLEHALT…PVGHDAFLTE (299 aa)). Ser-136 functions as the Nucleophile in the catalytic mechanism. Arg-205 serves as a coordination point for substrate. Active-site residues include Asp-303 and His-333. Residue Asp-334 participates in substrate binding.

Belongs to the AB hydrolase superfamily. MetX family. Homodimer.

The protein localises to the cytoplasm. It catalyses the reaction L-homoserine + acetyl-CoA = O-acetyl-L-homoserine + CoA. Its pathway is amino-acid biosynthesis; L-methionine biosynthesis via de novo pathway; O-acetyl-L-homoserine from L-homoserine: step 1/1. Functionally, transfers an acetyl group from acetyl-CoA to L-homoserine, forming acetyl-L-homoserine. The polypeptide is Homoserine O-acetyltransferase (Corynebacterium diphtheriae (strain ATCC 700971 / NCTC 13129 / Biotype gravis)).